Here is a 386-residue protein sequence, read N- to C-terminus: Succinate--CoA ligase [ADP-forming] subunit beta (386 aa).

Residues 9–244 form the ATP-grasp domain; it reads KALLRAAGIK…TTQEDHRETQ (236 aa). ATP-binding positions include Lys46, 53 to 55, Glu100, and Arg103; that span reads GRG. Residues Asn199 and Asp213 each contribute to the Mg(2+) site. Substrate-binding positions include Asn264 and 321–323; that span reads GIV.

It belongs to the succinate/malate CoA ligase beta subunit family. As to quaternary structure, heterotetramer of two alpha and two beta subunits. The cofactor is Mg(2+).

It carries out the reaction succinate + ATP + CoA = succinyl-CoA + ADP + phosphate. It catalyses the reaction GTP + succinate + CoA = succinyl-CoA + GDP + phosphate. It functions in the pathway carbohydrate metabolism; tricarboxylic acid cycle; succinate from succinyl-CoA (ligase route): step 1/1. In terms of biological role, succinyl-CoA synthetase functions in the citric acid cycle (TCA), coupling the hydrolysis of succinyl-CoA to the synthesis of either ATP or GTP and thus represents the only step of substrate-level phosphorylation in the TCA. The beta subunit provides nucleotide specificity of the enzyme and binds the substrate succinate, while the binding sites for coenzyme A and phosphate are found in the alpha subunit. This chain is Succinate--CoA ligase [ADP-forming] subunit beta, found in Dichelobacter nodosus (strain VCS1703A).